The sequence spans 134 residues: ATP synthase epsilon chain, chloroplastic (134 aa).

This sequence belongs to the ATPase epsilon chain family. As to quaternary structure, F-type ATPases have 2 components, CF(1) - the catalytic core - and CF(0) - the membrane proton channel. CF(1) has five subunits: alpha(3), beta(3), gamma(1), delta(1), epsilon(1). CF(0) has three main subunits: a, b and c.

It localises to the plastid. The protein resides in the chloroplast thylakoid membrane. Produces ATP from ADP in the presence of a proton gradient across the membrane. This chain is ATP synthase epsilon chain, chloroplastic, found in Liriodendron tulipifera (Tuliptree).